Reading from the N-terminus, the 274-residue chain is NAD(P)H dehydrogenase [quinone] 1 (274 aa).

FAD contacts are provided by residues histidine 12, 18 to 19 (FN), and glutamine 67. At serine 82 the chain carries Phosphoserine. 104 to 107 (LQWF) serves as a coordination point for FAD. Residue 126 to 128 (AYT) participates in substrate binding. Residues 148–151 (TTGG), tyrosine 156, and arginine 201 each bind FAD. The segment at 225–274 (PSSLFDLNFQAGFLMKKEVQDEEKNKKFGLSVGHHLGKSIPTDNQIKARK) is important for apoenzyme conformational stability. Residues lysine 250 and lysine 251 each participate in a glycyl lysine isopeptide (Lys-Gly) (interchain with G-Cter in SUMO2) cross-link.

This sequence belongs to the NAD(P)H dehydrogenase (quinone) family. Homodimer. Interacts with PDLIM4 isoform 2; this interaction stabilizes PDLIM4 isoform 2 in response to oxidative stress and protects it from ubiquitin-independent degradation by the core 20S proteasome. Interacts with TP73 (via SAM domain); this interaction is NADH-dependent, stabilizes TP73 in response to oxidative stress and protects it from ubiquitin-independent degradation by the 20S proteasome. Interacts with TP53; this interaction is NADH-dependent, stabilizes TP53 in response to oxidative stress and protects it from ubiquitin-independent degradation by the 20S proteasome. Requires FAD as cofactor.

It is found in the cytoplasm. Its subcellular location is the cytosol. The catalysed reaction is a quinone + NADH + H(+) = a quinol + NAD(+). The enzyme catalyses a quinone + NADPH + H(+) = a quinol + NADP(+). It carries out the reaction ubiquinone-10 + NADH + H(+) = ubiquinol-10 + NAD(+). It catalyses the reaction menadione + NADH + H(+) = menadiol + NAD(+). Functionally, flavin-containing quinone reductase that catalyzes two-electron reduction of quinones to hydroquinones using either NADH or NADPH as electron donors. In a ping-pong kinetic mechanism, the electrons are sequentially transferred from NAD(P)H to flavin cofactor and then from reduced flavin to the quinone, bypassing the formation of semiquinone and reactive oxygen species. Regulates cellular redox state primarily through quinone detoxification. Reduces components of plasma membrane redox system such as coenzyme Q and vitamin quinones, producing antioxidant hydroquinone forms. In the process may function as superoxide scavenger to prevent hydroquinone oxidation and facilitate excretion. Alternatively, can activate quinones and their derivatives by generating redox reactive hydroquinones with DNA cross-linking antitumor potential. Acts as a gatekeeper of the core 20S proteasome known to degrade proteins with unstructured regions. Upon oxidative stress, interacts with tumor suppressors TP53 and TP73 in a NADH-dependent way and inhibits their ubiquitin-independent degradation by the 20S proteasome. The protein is NAD(P)H dehydrogenase [quinone] 1 (NQO1) of Pongo abelii (Sumatran orangutan).